The primary structure comprises 157 residues: Endoribonuclease YbeY (157 aa).

3 residues coordinate Zn(2+): H114, H118, and H124.

The protein belongs to the endoribonuclease YbeY family. Zn(2+) serves as cofactor.

It localises to the cytoplasm. Single strand-specific metallo-endoribonuclease involved in late-stage 70S ribosome quality control and in maturation of the 3' terminus of the 16S rRNA. This Salmonella agona (strain SL483) protein is Endoribonuclease YbeY.